The primary structure comprises 328 residues: Thiamine thiazole synthase (328 aa).

Substrate is bound by residues Ala87, 108–109 (EA), Gly116, and Val181. The residue at position 215 (Cys215) is a 2,3-didehydroalanine (Cys). Residues Asp217, His232, Met284, and 294–296 (RMG) contribute to the substrate site.

Belongs to the THI4 family. In terms of assembly, homooctamer. It depends on Fe cation as a cofactor. Post-translationally, during the catalytic reaction, a sulfide is transferred from Cys-215 to a reaction intermediate, generating a dehydroalanine residue.

Its subcellular location is the cytoplasm. It is found in the nucleus. It carries out the reaction [ADP-thiazole synthase]-L-cysteine + glycine + NAD(+) = [ADP-thiazole synthase]-dehydroalanine + ADP-5-ethyl-4-methylthiazole-2-carboxylate + nicotinamide + 3 H2O + 2 H(+). Functionally, involved in biosynthesis of the thiamine precursor thiazole. Catalyzes the conversion of NAD and glycine to adenosine diphosphate 5-(2-hydroxyethyl)-4-methylthiazole-2-carboxylic acid (ADT), an adenylated thiazole intermediate. The reaction includes an iron-dependent sulfide transfer from a conserved cysteine residue of the protein to a thiazole intermediate. The enzyme can only undergo a single turnover, which suggests it is a suicide enzyme. May have additional roles in adaptation to various stress conditions and in DNA damage tolerance. The polypeptide is Thiamine thiazole synthase (thi2) (Schizosaccharomyces pombe (strain 972 / ATCC 24843) (Fission yeast)).